The sequence spans 167 residues: uncharacterized protein (167 aa).

2 consecutive transmembrane segments (helical) span residues 21–41 (KIGL…IYKP) and 87–107 (MIIT…YVFG). The span at 136–159 (RKQRLKEQREKKEQKKEQKKEKKT) shows a compositional bias: basic and acidic residues. Residues 136-167 (RKQRLKEQREKKEQKKEQKKEKKTERRKKKKL) are disordered.

Its subcellular location is the membrane. This is an uncharacterized protein from Schizosaccharomyces pombe (strain 972 / ATCC 24843) (Fission yeast).